The primary structure comprises 103 residues: Large ribosomal subunit protein bL21 (103 aa).

The protein belongs to the bacterial ribosomal protein bL21 family. In terms of assembly, part of the 50S ribosomal subunit. Contacts protein L20.

Functionally, this protein binds to 23S rRNA in the presence of protein L20. The protein is Large ribosomal subunit protein bL21 of Aliivibrio fischeri (strain ATCC 700601 / ES114) (Vibrio fischeri).